A 241-amino-acid chain; its full sequence is Glucosamine-6-phosphate deaminase (241 aa).

D67 (proton acceptor; for enolization step) is an active-site residue. N136 acts as the For ring-opening step in catalysis. The Proton acceptor; for ring-opening step role is filled by H138. E143 functions as the For ring-opening step in the catalytic mechanism.

Belongs to the glucosamine/galactosamine-6-phosphate isomerase family. NagB subfamily.

It catalyses the reaction alpha-D-glucosamine 6-phosphate + H2O = beta-D-fructose 6-phosphate + NH4(+). Its pathway is amino-sugar metabolism; N-acetylneuraminate degradation; D-fructose 6-phosphate from N-acetylneuraminate: step 5/5. Functionally, catalyzes the reversible isomerization-deamination of glucosamine 6-phosphate (GlcN6P) to form fructose 6-phosphate (Fru6P) and ammonium ion. This Clostridium novyi (strain NT) protein is Glucosamine-6-phosphate deaminase.